The sequence spans 329 residues: Ketol-acid reductoisomerase (NADP(+)) (329 aa).

A KARI N-terminal Rossmann domain is found at 2–182 (TQLFYDTDAD…GGTRAGILET (181 aa)). Residues 25 to 28 (YGSQ), Ser-51, Ser-53, and 83 to 86 (DEFQ) contribute to the NADP(+) site. His-108 is an active-site residue. Residue Gly-134 participates in NADP(+) binding. The region spanning 183 to 328 (NFKEETETDL…KGLRSMFSWL (146 aa)) is the KARI C-terminal knotted domain. Residues Asp-191, Glu-195, Glu-227, and Glu-231 each coordinate Mg(2+). Residue Ser-252 coordinates substrate.

Belongs to the ketol-acid reductoisomerase family. The cofactor is Mg(2+).

The catalysed reaction is (2R)-2,3-dihydroxy-3-methylbutanoate + NADP(+) = (2S)-2-acetolactate + NADPH + H(+). It carries out the reaction (2R,3R)-2,3-dihydroxy-3-methylpentanoate + NADP(+) = (S)-2-ethyl-2-hydroxy-3-oxobutanoate + NADPH + H(+). It participates in amino-acid biosynthesis; L-isoleucine biosynthesis; L-isoleucine from 2-oxobutanoate: step 2/4. The protein operates within amino-acid biosynthesis; L-valine biosynthesis; L-valine from pyruvate: step 2/4. Its function is as follows. Involved in the biosynthesis of branched-chain amino acids (BCAA). Catalyzes an alkyl-migration followed by a ketol-acid reduction of (S)-2-acetolactate (S2AL) to yield (R)-2,3-dihydroxy-isovalerate. In the isomerase reaction, S2AL is rearranged via a Mg-dependent methyl migration to produce 3-hydroxy-3-methyl-2-ketobutyrate (HMKB). In the reductase reaction, this 2-ketoacid undergoes a metal-dependent reduction by NADPH to yield (R)-2,3-dihydroxy-isovalerate. This is Ketol-acid reductoisomerase (NADP(+)) from Prochlorococcus marinus (strain MIT 9215).